The primary structure comprises 133 residues: ATP synthase epsilon chain, chloroplastic (133 aa).

This sequence belongs to the ATPase epsilon chain family. In terms of assembly, F-type ATPases have 2 components, CF(1) - the catalytic core - and CF(0) - the membrane proton channel. CF(1) has five subunits: alpha(3), beta(3), gamma(1), delta(1), epsilon(1). CF(0) has three main subunits: a, b and c.

It is found in the plastid. The protein localises to the chloroplast thylakoid membrane. In terms of biological role, produces ATP from ADP in the presence of a proton gradient across the membrane. The protein is ATP synthase epsilon chain, chloroplastic of Piper cenocladum (Ant piper).